The primary structure comprises 156 residues: Deoxyuridine 5'-triphosphate nucleotidohydrolase (156 aa).

Residues 74-76 (RSG), N87, 91-93 (TID), and K101 contribute to the substrate site.

Belongs to the dUTPase family. It depends on Mg(2+) as a cofactor.

It catalyses the reaction dUTP + H2O = dUMP + diphosphate + H(+). It functions in the pathway pyrimidine metabolism; dUMP biosynthesis; dUMP from dCTP (dUTP route): step 2/2. Its function is as follows. This enzyme is involved in nucleotide metabolism: it produces dUMP, the immediate precursor of thymidine nucleotides and it decreases the intracellular concentration of dUTP so that uracil cannot be incorporated into DNA. This Wolbachia sp. subsp. Brugia malayi (strain TRS) protein is Deoxyuridine 5'-triphosphate nucleotidohydrolase.